The chain runs to 257 residues: Pyridoxine 5'-phosphate synthase (257 aa).

N6 serves as a coordination point for 3-amino-2-oxopropyl phosphate. 1-deoxy-D-xylulose 5-phosphate is bound at residue 8–9 (DH). Residue R17 coordinates 3-amino-2-oxopropyl phosphate. Residue H42 is the Proton acceptor of the active site. 1-deoxy-D-xylulose 5-phosphate-binding residues include R44 and H49. E69 (proton acceptor) is an active-site residue. T99 serves as a coordination point for 1-deoxy-D-xylulose 5-phosphate. H211 serves as the catalytic Proton donor. 3-amino-2-oxopropyl phosphate is bound by residues G212 and 233–234 (GQ).

Belongs to the PNP synthase family. As to quaternary structure, homooctamer; tetramer of dimers.

It is found in the cytoplasm. It catalyses the reaction 3-amino-2-oxopropyl phosphate + 1-deoxy-D-xylulose 5-phosphate = pyridoxine 5'-phosphate + phosphate + 2 H2O + H(+). The protein operates within cofactor biosynthesis; pyridoxine 5'-phosphate biosynthesis; pyridoxine 5'-phosphate from D-erythrose 4-phosphate: step 5/5. Its function is as follows. Catalyzes the complicated ring closure reaction between the two acyclic compounds 1-deoxy-D-xylulose-5-phosphate (DXP) and 3-amino-2-oxopropyl phosphate (1-amino-acetone-3-phosphate or AAP) to form pyridoxine 5'-phosphate (PNP) and inorganic phosphate. This is Pyridoxine 5'-phosphate synthase from Campylobacter hominis (strain ATCC BAA-381 / DSM 21671 / CCUG 45161 / LMG 19568 / NCTC 13146 / CH001A).